Consider the following 420-residue polypeptide: ATP phosphoribosyltransferase regulatory subunit (420 aa).

This sequence belongs to the class-II aminoacyl-tRNA synthetase family. HisZ subfamily. As to quaternary structure, heteromultimer composed of HisG and HisZ subunits.

Its subcellular location is the cytoplasm. It functions in the pathway amino-acid biosynthesis; L-histidine biosynthesis; L-histidine from 5-phospho-alpha-D-ribose 1-diphosphate: step 1/9. In terms of biological role, required for the first step of histidine biosynthesis. May allow the feedback regulation of ATP phosphoribosyltransferase activity by histidine. This Bacillus thuringiensis subsp. konkukian (strain 97-27) protein is ATP phosphoribosyltransferase regulatory subunit.